We begin with the raw amino-acid sequence, 422 residues long: Enolase (422 aa).

Glutamine 162 contributes to the (2R)-2-phosphoglycerate binding site. The Proton donor role is filled by glutamate 204. Residues aspartate 241, glutamate 284, and aspartate 311 each contribute to the Mg(2+) site. The (2R)-2-phosphoglycerate site is built by lysine 336, arginine 365, serine 366, and lysine 387. The active-site Proton acceptor is the lysine 336.

It belongs to the enolase family. Component of the RNA degradosome, a multiprotein complex involved in RNA processing and mRNA degradation. It depends on Mg(2+) as a cofactor.

The protein resides in the cytoplasm. It localises to the secreted. The protein localises to the cell surface. The catalysed reaction is (2R)-2-phosphoglycerate = phosphoenolpyruvate + H2O. The protein operates within carbohydrate degradation; glycolysis; pyruvate from D-glyceraldehyde 3-phosphate: step 4/5. Catalyzes the reversible conversion of 2-phosphoglycerate (2-PG) into phosphoenolpyruvate (PEP). It is essential for the degradation of carbohydrates via glycolysis. This chain is Enolase, found in Legionella pneumophila (strain Corby).